The sequence spans 1107 residues: Integrator complex subunit 6 homolog (1107 aa).

The 194-residue stretch at 2–195 (LITFVVDTSG…LPMEPAIAPM (194 aa)) folds into the VWFA domain. Disordered stretches follow at residues 454–515 (RIIN…SGNL), 542–572 (DNET…SSNI), 629–801 (TLRD…VSSP), 818–861 (QISS…IVNN), and 946–1034 (VVRP…TTPN). Composition is skewed to low complexity over residues 460–513 (QQQQ…SGSG) and 546–562 (SENS…STTG). Over residues 629–639 (TLRDIDDDKKP) the composition is skewed to basic and acidic residues. Residues 693–801 (PSLPTLNSLS…PIPSTTVSSP (109 aa)) show a composition bias toward low complexity. A compositionally biased stretch (pro residues) spans 846–857 (SPPPPPPPPPLP). The segment covering 956-975 (PLTIDTLTSSSSSSTIPTTT) has biased composition (low complexity). Polar residues predominate over residues 976–996 (NGSLSTHDTPNTSPTLSSINY). Residues 997–1034 (NNNNNNNNNNNNNNNNNNNNNNNNNNRKNSIITTTTPN) are compositionally biased toward low complexity. In terms of domain architecture, MIF4G spans 1041–1103 (IKFVHKEIRR…SLISKLIGYI (63 aa)).

This sequence belongs to the Integrator subunit 6 family. In terms of assembly, component of the Integrator complex. The core complex associates with protein phosphatase 2A subunits, to form the Integrator-PP2A (INTAC) complex.

It is found in the nucleus. Its subcellular location is the chromosome. Functionally, component of the integrator complex, a multiprotein complex that terminates RNA polymerase II (Pol II) transcription in the promoter-proximal region of genes. The integrator complex provides a quality checkpoint during transcription elongation by driving premature transcription termination of transcripts that are unfavorably configured for transcriptional elongation: the complex terminates transcription by (1) catalyzing dephosphorylation of the C-terminal domain (CTD) of Pol II subunit polr2a, (2) degrading the exiting nascent RNA transcript via endonuclease activity and (3) promoting the release of Pol II from bound DNA. The integrator complex is also involved in terminating the synthesis of non-coding Pol II transcripts, such as enhancer RNAs (eRNAs), small nuclear RNAs (snRNAs), telomerase RNAs and long non-coding RNAs (lncRNAs). Within the integrator complex, INTS6 acts as a molecular adapter that promotes assembly of protein phosphatase 2A (PP2A) subunits to the integrator core complex, promoting recruitment of PP2A to transcription pause-release checkpoint. This chain is Integrator complex subunit 6 homolog (ints6), found in Dictyostelium discoideum (Social amoeba).